Consider the following 147-residue polypeptide: Spermidine export protein MdtJ (147 aa).

4 consecutive transmembrane segments (helical) span residues 1–21 (MIYWIFLGLAIIAEIIGTLSM), 31–51 (TGHIVMYFMITGSYVMLSLAV), 54–74 (VALGVAYALWEGIGILIITIF), and 81–101 (ETLSPLKIAGLVTLIGGILLV). A disordered region spans residues 105-147 (TRKPKQPNCHRGNRPPSVQELKTQTTGHHKGVAVESGEHHAAA).

It belongs to the drug/metabolite transporter (DMT) superfamily. Small multidrug resistance (SMR) (TC 2.A.7.1) family. MdtJ subfamily. In terms of assembly, forms a complex with MdtI.

The protein resides in the cell inner membrane. Catalyzes the excretion of spermidine. This chain is Spermidine export protein MdtJ, found in Yersinia pestis bv. Antiqua (strain Antiqua).